The sequence spans 72 residues: DNA-directed RNA polymerase subunit omega (72 aa).

This sequence belongs to the RNA polymerase subunit omega family. As to quaternary structure, the RNAP catalytic core consists of 2 alpha, 1 beta, 1 beta' and 1 omega subunit. When a sigma factor is associated with the core the holoenzyme is formed, which can initiate transcription.

It carries out the reaction RNA(n) + a ribonucleoside 5'-triphosphate = RNA(n+1) + diphosphate. In terms of biological role, promotes RNA polymerase assembly. Latches the N- and C-terminal regions of the beta' subunit thereby facilitating its interaction with the beta and alpha subunits. This Clostridium botulinum (strain Loch Maree / Type A3) protein is DNA-directed RNA polymerase subunit omega.